The following is a 549-amino-acid chain: MKNINPTTTNAWKALQQHHKTQSAVTIQQLFAQEKDRFTDYSLSFNNEVLVDFSKNNVTKETLGLLRQLAQECALSEAVDAMFSGAKINKTEDRAVLHTALRNRSNSPVLVDGKDVMPEVNAVLAKMKDFCHRVISGEWKGYTGKAITDVVNIGIGGSDLGPYMVTEALRPYKNHLNLHFVSNVDGTHIAETLKKVNPETTLFLVASKTFTTQETMTNAHSARNWFLATAKDESHVAKHFAALSTNSKAVAEFGIDTNNMFEFWDWVGGRYSLWSAIGLSIALSIGFEHFEALLAGAHEMDKHFRTAPIEQNIPTTLALIGLWNTNFLGAQTEAILPYDQYLHRFAAYFQQGNMESNGKYVDRNGEVIDNYQTGPIIWGEPGTNGQHAFYQLIHQGTTLIPCDFIAPAQTHNPLADHHEKLLSNFFAQTEALAFGKTKEEVEAEFVKAGKSLDEVKEVVPFKVFTGNKPTNSILVQKITPFTLGALIAMYEHKIFVQGVMFNIYSFDQWGVELGKQLANRILPELANRETITTHDSSTNGLINQYKQWR.

E355 acts as the Proton donor in catalysis. Residues H387 and K515 contribute to the active site.

It belongs to the GPI family.

It is found in the cytoplasm. It catalyses the reaction alpha-D-glucose 6-phosphate = beta-D-fructose 6-phosphate. The protein operates within carbohydrate biosynthesis; gluconeogenesis. It participates in carbohydrate degradation; glycolysis; D-glyceraldehyde 3-phosphate and glycerone phosphate from D-glucose: step 2/4. Catalyzes the reversible isomerization of glucose-6-phosphate to fructose-6-phosphate. In Pasteurella multocida (strain Pm70), this protein is Glucose-6-phosphate isomerase.